The chain runs to 96 residues: Protein C4 (96 aa).

The N-myristoyl glycine; by host moiety is linked to residue Gly2. The tract at residues 66-96 is disordered; the sequence is STDDLQGEDSRQPMTLTPRQLTQDVSRRLLM. A compositionally biased stretch (polar residues) spans 77-89; sequence QPMTLTPRQLTQD.

The protein belongs to the geminiviridae protein AC4/C4 family.

It localises to the host cell membrane. Pathogenicity determinant. May act as a suppressor of RNA-mediated gene silencing, also known as post-transcriptional gene silencing (PTGS), a mechanism of plant viral defense that limits the accumulation of viral RNAs. The sequence is that of Protein C4 from Solanum lycopersicum (Tomato).